A 286-amino-acid chain; its full sequence is uncharacterized protein (286 aa).

The first 19 residues, 1-19 (MISKEYISLLSALLTKGYS), serve as a signal peptide directing secretion.

This is an uncharacterized protein from Acidianus filamentous virus 2 (isolate Italy/Pozzuoli) (AFV-2).